Consider the following 255-residue polypeptide: Taurine import ATP-binding protein TauB (255 aa).

Residues 2–229 (LQISHLYADY…RFVAGESSRS (228 aa)) enclose the ABC transporter domain. 34 to 41 (GPSGCGKT) is a binding site for ATP.

The protein belongs to the ABC transporter superfamily. Taurine importer (TC 3.A.1.17.1) family. In terms of assembly, the complex is composed of two ATP-binding proteins (TauB), two transmembrane proteins (TauC) and a solute-binding protein (TauA).

It is found in the cell inner membrane. It carries out the reaction taurine(out) + ATP + H2O = taurine(in) + ADP + phosphate + H(+). Part of the ABC transporter complex TauABC involved in taurine import. Responsible for energy coupling to the transport system. This Shigella dysenteriae serotype 1 (strain Sd197) protein is Taurine import ATP-binding protein TauB.